Consider the following 267-residue polypeptide: MSELQIVVLALIQGLTEFLPISSSAHLILPSQLLGWQDQGLAFDLILNIGTLSAVLIYFRMEVINMSRAWVGSLRGKGETQDSRLAWWILWSTIPAALIGFFGKSLVETYLRSGYVIAVTTTVFGLLLWWADANAKQVKTEYQTGLKGALFIGFAQVLALIPGTSRSGITITAGLMLGLTRNGAARFSFLMSIPIIAMASGYDLLKFILSDEYVDWGPLFLGAGISFVSAILCIHVFLILLNRVGMMPFVIYRLLLGGFLFYILSGT.

The next 8 helical transmembrane spans lie at 1–21, 39–59, 87–107, 113–133, 144–164, 189–209, 219–239, and 244–264; these read MSELQIVVLALIQGLTEFLPI, QGLAFDLILNIGTLSAVLIYF, WWILWSTIPAALIGFFGKSLV, SGYVIAVTTTVFGLLLWWADA, TGLKGALFIGFAQVLALIPGT, FLMSIPIIAMASGYDLLKFIL, LFLGAGISFVSAILCIHVFLI, and VGMMPFVIYRLLLGGFLFYIL.

Belongs to the UppP family.

It localises to the cell inner membrane. The catalysed reaction is di-trans,octa-cis-undecaprenyl diphosphate + H2O = di-trans,octa-cis-undecaprenyl phosphate + phosphate + H(+). In terms of biological role, catalyzes the dephosphorylation of undecaprenyl diphosphate (UPP). Confers resistance to bacitracin. This is Undecaprenyl-diphosphatase from Psychromonas ingrahamii (strain DSM 17664 / CCUG 51855 / 37).